The sequence spans 256 residues: Type II phosphatidylinositol 4,5-bisphosphate 4-phosphatase (256 aa).

Positions 1–10 are enriched in basic and acidic residues; sequence MAADGIDERS. Residues 1–25 form a disordered region; the sequence is MAADGIDERSPLISPSSGNVTPTAP. Polar residues predominate over residues 13-22; it reads ISPSSGNVTP. C106 is an active-site residue. A CX5R motif motif is present at residues 106 to 112; the sequence is CKDISRR. 2 helical membrane-spanning segments follow: residues 191 to 211 and 226 to 246; these read CCTY…LTVG and WAVA…WGAI.

Its subcellular location is the late endosome membrane. It is found in the lysosome membrane. It carries out the reaction a 1,2-diacyl-sn-glycero-3-phospho-(1D-myo-inositol-4,5-bisphosphate) + H2O = a 1,2-diacyl-sn-glycero-3-phospho-(1D-myo-inositol-5-phosphate) + phosphate. Its function is as follows. Catalyzes the hydrolysis of phosphatidylinositol-4,5-bisphosphate (PtdIns-4,5-P2) to phosphatidylinositol-4-phosphate (PtdIns-4-P). This is Type II phosphatidylinositol 4,5-bisphosphate 4-phosphatase from Xenopus laevis (African clawed frog).